Reading from the N-terminus, the 147-residue chain is Large ribosomal subunit protein uL11 (147 aa).

The protein belongs to the universal ribosomal protein uL11 family. Part of the ribosomal stalk of the 50S ribosomal subunit. Interacts with L10 and the large rRNA to form the base of the stalk. L10 forms an elongated spine to which L12 dimers bind in a sequential fashion forming a multimeric L10(L12)X complex. Post-translationally, one or more lysine residues are methylated.

Its function is as follows. Forms part of the ribosomal stalk which helps the ribosome interact with GTP-bound translation factors. This is Large ribosomal subunit protein uL11 from Metamycoplasma arthritidis (strain 158L3-1) (Mycoplasma arthritidis).